A 617-amino-acid polypeptide reads, in one-letter code: Chaperone protein DnaK (617 aa).

The interval 579-617 is disordered; sequence KAQQEAQQASGEAGSADARGPDETVVDADYEVVDDEKRK. The segment covering 580–594 has biased composition (low complexity); it reads AQQEAQQASGEAGSA. The span at 602–617 shows a compositional bias: acidic residues; that stretch reads TVVDADYEVVDDEKRK.

This sequence belongs to the heat shock protein 70 family.

In terms of biological role, acts as a chaperone. This Methanosarcina acetivorans (strain ATCC 35395 / DSM 2834 / JCM 12185 / C2A) protein is Chaperone protein DnaK.